Here is a 374-residue protein sequence, read N- to C-terminus: 5-methylthioribulose-1-phosphate isomerase (374 aa).

It belongs to the RuBisCO large chain family. Type IV subfamily.

The catalysed reaction is 5-(methylsulfanyl)-D-ribulose 1-phosphate = S-methyl-1-thio-D-xylulose 5-phosphate. It carries out the reaction 5-(methylsulfanyl)-D-ribulose 1-phosphate = 1-(methylsulfanyl)ribulose 5-phosphate. Its pathway is amino-acid biosynthesis; L-methionine biosynthesis via salvage pathway. The protein operates within metabolic intermediate biosynthesis; 1-deoxy-D-xylulose 5-phosphate biosynthesis. In terms of biological role, catalyzes the conversion of 5-methylthio-D-ribulose 1-phosphate (MTRu-1P) to a 3:1 mixture of 1-methylthioxylulose 5-phosphate (MTXu-5P) and 1-methylthioribulose 5-phosphate (MTRu-5P). Involved in the MTA-isoprenoid shunt of the methionine salvage pathway. This is 5-methylthioribulose-1-phosphate isomerase from Rhodospirillum rubrum (strain ATCC 11170 / ATH 1.1.1 / DSM 467 / LMG 4362 / NCIMB 8255 / S1).